Consider the following 142-residue polypeptide: MRLLGLDVGSKTVGVAISDELGITAQKLETIQIDETKYNFGMRPLKKLVRQYDVDGFVLGLPKNMDGTSGNSVARSKAYGKRLEEKFNLPVYYSDERLTTIESRRVLIEDAGMHDRKKRKQVIDQMAAVLILQNYLDLHRKD.

It belongs to the YqgF nuclease family.

The protein localises to the cytoplasm. In terms of biological role, could be a nuclease involved in processing of the 5'-end of pre-16S rRNA. This Lactobacillus acidophilus (strain ATCC 700396 / NCK56 / N2 / NCFM) protein is Putative pre-16S rRNA nuclease.